We begin with the raw amino-acid sequence, 205 residues long: MAPDTPSQPASRRDELLQLAATMFADRGLKATTVRDIADSAGILSGSLYHHFKSKEQMVEEVLRDFLDWLFGRYQQILDTATSPLEKLTGLFMASFEAIEHRHAQVVIYQDEAKRLSDLPQFDFVETRNKEQRKMWVDILQEGVADGSFRPDLDVDLVYRFIRDTTWVSVRWYKPGGPLSAEQVGQQYLAIVLGGITQSQGDKHA.

The 61-residue stretch at Ala-10–Leu-70 folds into the HTH tetR-type domain. The segment at residues Thr-33 to Phe-52 is a DNA-binding region (H-T-H motif).

In terms of assembly, homodimer.

In terms of biological role, controls the expression of a small regulon that may play a role in the utilization of cholesterol. The polypeptide is HTH-type transcriptional repressor KstR2 (kstR2) (Mycolicibacterium smegmatis (strain ATCC 700084 / mc(2)155) (Mycobacterium smegmatis)).